A 433-amino-acid chain; its full sequence is Ribulose bisphosphate carboxylase/oxygenase activase, chloroplastic (433 aa).

Over residues 1-20 (MAAAFSSTVGAPASTPTRSS) the composition is skewed to polar residues. The N-terminal 53 residues, 1–53 (MAAAFSSTVGAPASTPTRSSFLGKKLNKPQVSAAVTYHGKSSSSNSRFKAMAA), are a transit peptide targeting the chloroplast. Positions 1 to 60 (MAAAFSSTVGAPASTPTRSSFLGKKLNKPQVSAAVTYHGKSSSSNSRFKAMAAKEVDETK) are disordered. 161 to 168 (GGKGQGKS) provides a ligand contact to ATP.

Belongs to the RuBisCO activase family.

The protein resides in the plastid. It is found in the chloroplast stroma. In terms of biological role, activation of RuBisCO (ribulose-1,5-bisphosphate carboxylase/oxygenase; EC 4.1.1.39) involves the ATP-dependent carboxylation of the epsilon-amino group of lysine leading to a carbamate structure. This is Ribulose bisphosphate carboxylase/oxygenase activase, chloroplastic (RCA1) from Zea mays (Maize).